A 376-amino-acid polypeptide reads, in one-letter code: Chaperone protein DnaJ (376 aa).

The J domain occupies 5 to 69; it reads DYYEVLGISK…QKRAQYDQYG (65 aa). The segment at 133 to 215 adopts a CR-type zinc-finger fold; the sequence is GKDAEIEIPR…CHGKGRVTKT (83 aa). Zn(2+)-binding residues include Cys-146, Cys-149, Cys-163, Cys-166, Cys-189, Cys-192, Cys-203, and Cys-206. CXXCXGXG motif repeat units follow at residues 146 to 153, 163 to 170, 189 to 196, and 203 to 210; these read CDTCHGSG, CSHCGGKG, CQYCNGTG, and CSTCHGKG.

This sequence belongs to the DnaJ family. Homodimer. Requires Zn(2+) as cofactor.

It is found in the cytoplasm. Its function is as follows. Participates actively in the response to hyperosmotic and heat shock by preventing the aggregation of stress-denatured proteins and by disaggregating proteins, also in an autonomous, DnaK-independent fashion. Unfolded proteins bind initially to DnaJ; upon interaction with the DnaJ-bound protein, DnaK hydrolyzes its bound ATP, resulting in the formation of a stable complex. GrpE releases ADP from DnaK; ATP binding to DnaK triggers the release of the substrate protein, thus completing the reaction cycle. Several rounds of ATP-dependent interactions between DnaJ, DnaK and GrpE are required for fully efficient folding. Also involved, together with DnaK and GrpE, in the DNA replication of plasmids through activation of initiation proteins. This chain is Chaperone protein DnaJ, found in Listeria welshimeri serovar 6b (strain ATCC 35897 / DSM 20650 / CCUG 15529 / CIP 8149 / NCTC 11857 / SLCC 5334 / V8).